The sequence spans 193 residues: Ion-translocating oxidoreductase complex subunit A (193 aa).

Transmembrane regions (helical) follow at residues 5 to 25 (LLLL…FLGL), 39 to 59 (IGMG…SYLV), 67 to 87 (LGIE…VVQF), 102 to 122 (VLGI…VALL), 134 to 154 (IIYG…FSAM), and 171 to 191 (SIAM…TGLV).

Belongs to the NqrDE/RnfAE family. The complex is composed of six subunits: RnfA, RnfB, RnfC, RnfD, RnfE and RnfG.

The protein localises to the cell inner membrane. In terms of biological role, part of a membrane-bound complex that couples electron transfer with translocation of ions across the membrane. This Aliivibrio fischeri (strain ATCC 700601 / ES114) (Vibrio fischeri) protein is Ion-translocating oxidoreductase complex subunit A.